The following is a 547-amino-acid chain: Chaperonin GroEL (547 aa).

Residues 30-33 (TLGP), lysine 51, 87-91 (DGTTT), glycine 415, 479-481 (NAA), and aspartate 495 contribute to the ATP site.

Belongs to the chaperonin (HSP60) family. As to quaternary structure, forms a cylinder of 14 subunits composed of two heptameric rings stacked back-to-back. Interacts with the co-chaperonin GroES.

It is found in the cytoplasm. The enzyme catalyses ATP + H2O + a folded polypeptide = ADP + phosphate + an unfolded polypeptide.. Together with its co-chaperonin GroES, plays an essential role in assisting protein folding. The GroEL-GroES system forms a nano-cage that allows encapsulation of the non-native substrate proteins and provides a physical environment optimized to promote and accelerate protein folding. In Pseudomonas savastanoi pv. phaseolicola (strain 1448A / Race 6) (Pseudomonas syringae pv. phaseolicola (strain 1448A / Race 6)), this protein is Chaperonin GroEL.